We begin with the raw amino-acid sequence, 490 residues long: MTTLPVQQLYIHGQRVDATSGKTFKTVNPATGEVIAEVQVASQADVERAVQSASEGQKVWAAMTAMERSRILRRAVEILRERNDELAHLETLDTGKALAETTTVDIVTGADVVEYYAGLATAIEGIQLPLRESSFFYTRREPLGVVAGIGAWNYPIQIAMWKSAPALAAGNAMVFKPSEVTPLTAIRLAEIYTEAGVPAGVFNVVQGPGREIGQWLTEHPVIEKISFTGGVATGKKVMASAASSSLKEVTMELGGKSPLVICDDADLDRAADIAVMANFFSSGQVCTNGTRVFVPRSMLAAFEAAVVERVKRIRIGDPMAAETNFGPLTSFPHMENVLRYIESGKAEGARLLTGGGRATEGALANGAYVLPTVFSDCRDDMTIVKEEIFGPVMSILAYDDEDEVVRRANDTTFGLAAGVVSKDISRAHRIIHRLEAGICWINTWGESPAEMPVGGYKESGVGRENGISTLGHYTRIKSVQVELGDYASVF.

2 residues coordinate K(+): T26 and D93. 150–152 (GAW) is an NAD(+) binding site. K162 acts as the Charge relay system in catalysis. Position 176 to 179 (176 to 179 (KPSE)) interacts with NAD(+). Residue V180 participates in K(+) binding. 230–233 (GVAT) contacts NAD(+). Residue L246 coordinates K(+). E252 functions as the Proton acceptor in the catalytic mechanism. 3 residues coordinate NAD(+): G254, C286, and E387. The Nucleophile role is filled by C286. C286 is subject to Cysteine sulfenic acid (-SOH). 2 residues coordinate K(+): K457 and G460. Catalysis depends on E464, which acts as the Charge relay system.

This sequence belongs to the aldehyde dehydrogenase family. As to quaternary structure, dimer of dimers. It depends on K(+) as a cofactor.

The catalysed reaction is betaine aldehyde + NAD(+) + H2O = glycine betaine + NADH + 2 H(+). Its pathway is amine and polyamine biosynthesis; betaine biosynthesis via choline pathway; betaine from betaine aldehyde: step 1/1. Its function is as follows. Involved in the biosynthesis of the osmoprotectant glycine betaine. Catalyzes the irreversible oxidation of betaine aldehyde to the corresponding acid. This is Betaine aldehyde dehydrogenase from Stenotrophomonas maltophilia (strain K279a).